A 102-amino-acid polypeptide reads, in one-letter code: Small ribosomal subunit protein uS10 (102 aa).

The protein belongs to the universal ribosomal protein uS10 family. As to quaternary structure, part of the 30S ribosomal subunit.

Involved in the binding of tRNA to the ribosomes. This is Small ribosomal subunit protein uS10 from Bacillus cereus (strain ATCC 10987 / NRS 248).